The following is a 244-amino-acid chain: Anti-H(O) lectin 1 (244 aa).

N-linked (GlcNAc...) asparagine glycosylation is found at asparagine 113 and asparagine 117. Residues glutamate 127 and aspartate 129 each contribute to the Mn(2+) site. Positions 129, 131, 137, and 142 each coordinate Ca(2+). Mn(2+)-binding residues include aspartate 142 and histidine 145.

The protein belongs to the leguminous lectin family. As to quaternary structure, homotetramer.

Its function is as follows. Di-N-acetylchitobiose-binding anti-H(O) lectin. In Cytisophyllum sessilifolium (Sessile-leaved cytisus), this protein is Anti-H(O) lectin 1.